Here is a 682-residue protein sequence, read N- to C-terminus: MWLKLFFLLLYFLVLFVLARFFEAIVWYETGIFATQLVDPVALSFKKLKTILECRGLGYSGLPEKKDVRELVEKSGDLMEGELYSALKEEEASESVSSTNFSGEMHFYELVEDTKDGIWLVQVIANDRSPLVGKIHWEKMVKKVSRFGIRTGTFNCSSDPRYCRRRGWVRSTLIMSVPQTSTSKGKVMLKEYSGRKIEVEHIFKWITAHAASRIKTIYNVEHLKEEWNKSDQYWVKIYLFANLDQPPAFFSALSIKFTGRVEFIFVNVENWNNKSYMTDIGIYNMPSYILRTPEGIYRYGNHTGEFISLQAMDSFLRSLQPEVNDLFVLSLVLVNLMAWMDLFITQGATIKRFVVLISTLGTYNSLLIISWLPVLGFLQLPYLDSFYEYSLRLLRYSNTTTLASWVRADWMFYSSHPALFLSTYLGHGLLIDYFEKKRRRSNNDEVNANNLEWLSSLWDWYTSYLFHPIASFQNFPVDSDWDEDPDLFLERLAFPDLWLHPLIPTDYIKNLPMWRFKCLGAQSEEEMSESSQDTENDSDSDNTDTFSSSKDVFEDKQNVHSSPGRTSRCDTEACSCANKCVSSPCERKRRSYGSHNTKEDMEPDWLTWPAGTLHCTECVVCLENFENGCLLMGLPCGHVFHQNCIVMWLAGGRHCCPVCRWPSYKKKQPYAQQQPLSNDAPS.

The next 4 membrane-spanning stretches (helical) occupy residues F6–V26, L326–Q346, L366–F386, and M411–I431. A compositionally biased stretch (acidic residues) spans E525–N542. The disordered stretch occupies residues E525–S549. An RING-type zinc finger spans residues C618–R660.

As to quaternary structure, interacts with DERL1 and VCP. As to expression, expressed in different tissues including hippocampus, cerebral cortex, heart, kidney, spleen and lung. Expression is increased in hippocampus and frontal cortex after chronic treatment with antidepressants.

Its subcellular location is the endoplasmic reticulum membrane. The catalysed reaction is S-ubiquitinyl-[E2 ubiquitin-conjugating enzyme]-L-cysteine + [acceptor protein]-L-lysine = [E2 ubiquitin-conjugating enzyme]-L-cysteine + N(6)-ubiquitinyl-[acceptor protein]-L-lysine.. Its pathway is protein modification; protein ubiquitination. Functionally, acts as an E2-dependent E3 ubiquitin-protein ligase, probably involved in the ER-associated protein degradation pathway. This Rattus norvegicus (Rat) protein is E3 ubiquitin-protein ligase RNF103 (Rnf103).